The chain runs to 207 residues: Guanylate kinase (207 aa).

One can recognise a Guanylate kinase-like domain in the interval 4–184 (GTLYIVSAPS…ALMDFKAIIR (181 aa)). 11–18 (APSGAGKS) is an ATP binding site.

Belongs to the guanylate kinase family.

The protein resides in the cytoplasm. It carries out the reaction GMP + ATP = GDP + ADP. The enzyme catalyses dZMP + ATP = dZDP + ADP. It functions in the pathway purine metabolism. Essential for recycling GMP and indirectly, cGMP. In terms of biological role, (Microbial infection) Catalyzes the phosphorylation of dZMP to dZDP, when the bacterium is infected by a phage that produces the substrate for the synthesis of dZTP (2- amino-2'-deoxyadenosine 5'-triphosphate), which is then used by the phage as a DNA polymerase substrate. The protein is Guanylate kinase (gmk) of Vibrio cholerae serotype O1 (strain ATCC 39315 / El Tor Inaba N16961).